The chain runs to 57 residues: High light-inducible protein HliD (57 aa).

The short motif at 25-30 is the Chlorophyll-binding motif element; that stretch reads EKLNGR. The chain crosses the membrane as a helical span at residues 25-46; that stretch reads EKLNGRAAMVGFLLILVIEYFT.

It belongs to the Hlip family. As to quaternary structure, probably forms dimers which bind 6 chlorophyll a and 2 beta-carotenoid molecules. Cofractionates in an approximately 50 kDa fraction of the thylakoid membrane with HliC. Does not associate with mature PSII. Purified in several chlorophyll- and carotenoid-containing complexes, including photosystem II (PSII) assembly intermediate complex RCII* (iD1, D1, D2, PsbE, PsbF, PsbI, Ycf39, Ycf48, HliC and HliD) and the Ycf39-Hlip complex (Ycf39, HliC, HliD and pigments).

It is found in the cellular thylakoid membrane. Its function is as follows. Involved in photosystem II (PSII) assembly and/or repair under high light stress. Required for binding of chlorophyll and carotenoids by the Ycf39-Hlip complex. The Ycf39-Hlip complex binds D1 at an early stage of PSII assembly along with Ycf48, ribosomes and ChlG, the last enzyme in chlorophyll biosynthesis; it may be involved in chlorophyll reuse and delivery to D1 in the initial stages of PSII assembly. Binds chlorophyll a and beta-carotenoid in a 3:1 stoichiometry in the presence and absence of Yfc39; in the Ycf39-HliC-HliD complex, HliD binds all the pigment. The Ycf39-Hlip complex efficiently quenches chlorophyll fluorescence, contributing to photoprotection. Deletion of 4 to 5 members of the Hlip family suggests the proteins are involved in regulation of chlorophyll biosynthesis, in stabilization of chlorophyll-binding proteins and/or in reuse of chlorophylls, and may regulate tetrapyrrole biosynthesis. Might bind chlorophyll and/or carotenoids in association with HliC (called the ScpBE pair). The Hlips might regulate tetrapyrrole biosynthesis, maybe at the level of aminolevulinic acid synthesis and probably stabilize PSII assembly intermediates. In Synechocystis sp. (strain ATCC 27184 / PCC 6803 / Kazusa), this protein is High light-inducible protein HliD (hliD).